The primary structure comprises 968 residues: Isoleucine--tRNA ligase (968 aa).

The 'HIGH' region signature appears at 68–78; that stretch reads PYANGALHMGH. An L-isoleucyl-5'-AMP-binding site is contributed by Glu-584. The short motif at 625 to 629 is the 'KMSKS' region element; sequence KMSKS. ATP is bound at residue Lys-628. Residues Cys-938, Cys-941, Cys-958, and Cys-961 each contribute to the Zn(2+) site.

Belongs to the class-I aminoacyl-tRNA synthetase family. IleS type 1 subfamily. In terms of assembly, monomer. Requires Zn(2+) as cofactor.

The protein resides in the cytoplasm. The catalysed reaction is tRNA(Ile) + L-isoleucine + ATP = L-isoleucyl-tRNA(Ile) + AMP + diphosphate. Catalyzes the attachment of isoleucine to tRNA(Ile). As IleRS can inadvertently accommodate and process structurally similar amino acids such as valine, to avoid such errors it has two additional distinct tRNA(Ile)-dependent editing activities. One activity is designated as 'pretransfer' editing and involves the hydrolysis of activated Val-AMP. The other activity is designated 'posttransfer' editing and involves deacylation of mischarged Val-tRNA(Ile). In Prochlorococcus marinus (strain MIT 9313), this protein is Isoleucine--tRNA ligase.